Consider the following 165-residue polypeptide: Nucleotide-binding protein Syncc9605_0652 (165 aa).

Belongs to the YajQ family.

Nucleotide-binding protein. This chain is Nucleotide-binding protein Syncc9605_0652, found in Synechococcus sp. (strain CC9605).